We begin with the raw amino-acid sequence, 142 residues long: Hemoglobin subunit alpha (142 aa).

In terms of domain architecture, Globin spans 2–142 (VLSPDDKKHV…VSTVLTSKYR (141 aa)). S4 carries the phosphoserine modification. Residues K8 and K12 each carry the N6-succinyllysine modification. K17 is subject to N6-acetyllysine; alternate. Residue K17 is modified to N6-succinyllysine; alternate. Position 25 is a phosphotyrosine (Y25). The residue at position 36 (S36) is a Phosphoserine. Residue K41 is modified to N6-succinyllysine. S50 bears the Phosphoserine mark. Residue H59 participates in O2 binding. Residue H88 coordinates heme b. S103 is modified (phosphoserine). Residue T109 is modified to Phosphothreonine. Phosphoserine occurs at positions 125 and 132. Phosphothreonine occurs at positions 135 and 138. Position 139 is a phosphoserine (S139).

This sequence belongs to the globin family. As to quaternary structure, heterotetramer of two alpha chains and two beta chains. Red blood cells.

Its function is as follows. Involved in oxygen transport from the lung to the various peripheral tissues. Functionally, hemopressin acts as an antagonist peptide of the cannabinoid receptor CNR1. Hemopressin-binding efficiently blocks cannabinoid receptor CNR1 and subsequent signaling. The sequence is that of Hemoglobin subunit alpha (HBA) from Papio anubis (Olive baboon).